A 1077-amino-acid chain; its full sequence is ATP-dependent helicase/deoxyribonuclease subunit B (1077 aa).

It belongs to the helicase family. AddB/RexB type 2 subfamily. In terms of assembly, heterodimer of AddA and RexB. Requires Mg(2+) as cofactor.

Functionally, the heterodimer acts as both an ATP-dependent DNA helicase and an ATP-dependent, dual-direction single-stranded exonuclease. Recognizes the chi site generating a DNA molecule suitable for the initiation of homologous recombination. This subunit has 5' -&gt; 3' nuclease activity but not helicase activity. This chain is ATP-dependent helicase/deoxyribonuclease subunit B, found in Streptococcus agalactiae serotype III (strain NEM316).